The chain runs to 270 residues: Cerberus (270 aa).

Positions 1 to 20 are cleaved as a signal peptide; that stretch reads MLLNVLRICIIVCLVNDGAG. 3 N-linked (GlcNAc...) asparagine glycosylation sites follow: asparagine 103, asparagine 112, and asparagine 154. Disulfide bonds link cysteine 169/cysteine 215, cysteine 183/cysteine 229, cysteine 193/cysteine 245, and cysteine 197/cysteine 247. A CTCK domain is found at 169–253; it reads CKTLPFTQNI…ECTCEAHKSN (85 aa). N-linked (GlcNAc...) asparagine glycosylation is present at asparagine 228.

Belongs to the DAN family. As to quaternary structure, the long chain interacts with nodal/nr-1, bmp4 and wnt8, thereby inhibiting their function. The short chain interacts with nodal/nr-1 but not bmp4 or wnt8. As to expression, a component of the Nieuwkoop signaling center in the blastula. Expressed transiently in a broad anterior domain of the gastrula, including the anterior endoderm of the Spemann's organizer and more laterally the cardiac primordia. Expression is excluded from the prospective prechordal plate region and the ring of cells that give rise to the trunk-tail mesoderm.

It is found in the secreted. Functionally, inhibits wnt, nodal/nr-1 and bmp signaling in the embryo to promote head formation and anterior neural induction. Within the endoderm, acts as an essential mediator of nodal/nr-1-induced cardiogenesis in the overlying mesoderm. In Xenopus laevis (African clawed frog), this protein is Cerberus.